A 458-amino-acid chain; its full sequence is F-box/FBD/LRR-repeat protein At1g78750 (458 aa).

The region spanning 17–67 (VDWISNLPETLLCQVLFYLPTKDVVKSSVLSSRWRNLWKYVPGFNLSYCDF) is the F-box domain. 5 LRR repeats span residues 152–183 (CETL…HLSI), 184–209 (VKFA…NINR), 231–258 (VADT…RLSD), 302–327 (DFLV…YDYS), and 345–370 (FYGY…VVGS). Positions 376–428 (KEGINILSVPRGFLSSLEYVKIERPLKGEAMEMKLVSYLLENSTILKKLTLCL) constitute an FBD domain.

This chain is F-box/FBD/LRR-repeat protein At1g78750, found in Arabidopsis thaliana (Mouse-ear cress).